A 705-amino-acid polypeptide reads, in one-letter code: Elongation factor G (705 aa).

Residues 7-287 (HLTRNIGIMA…YVCAFLPSPL (281 aa)) enclose the tr-type G domain. GTP-binding positions include 16-23 (AHIDAGKT), 84-88 (DTPGH), and 138-141 (NKMD). Residues 293 to 312 (VGTNPTTGAEEDRKPSEDEK) form a disordered region. Residues 302–312 (EEDRKPSEDEK) show a composition bias toward basic and acidic residues.

Belongs to the TRAFAC class translation factor GTPase superfamily. Classic translation factor GTPase family. EF-G/EF-2 subfamily.

It is found in the cytoplasm. In terms of biological role, catalyzes the GTP-dependent ribosomal translocation step during translation elongation. During this step, the ribosome changes from the pre-translocational (PRE) to the post-translocational (POST) state as the newly formed A-site-bound peptidyl-tRNA and P-site-bound deacylated tRNA move to the P and E sites, respectively. Catalyzes the coordinated movement of the two tRNA molecules, the mRNA and conformational changes in the ribosome. The polypeptide is Elongation factor G (Phocaeicola vulgatus (strain ATCC 8482 / DSM 1447 / JCM 5826 / CCUG 4940 / NBRC 14291 / NCTC 11154) (Bacteroides vulgatus)).